Here is a 407-residue protein sequence, read N- to C-terminus: Phosphopentomutase (407 aa).

Mn(2+)-binding residues include D11, D305, H310, D346, H347, and H358.

It belongs to the phosphopentomutase family. Mn(2+) serves as cofactor.

The protein localises to the cytoplasm. The enzyme catalyses 2-deoxy-alpha-D-ribose 1-phosphate = 2-deoxy-D-ribose 5-phosphate. The catalysed reaction is alpha-D-ribose 1-phosphate = D-ribose 5-phosphate. The protein operates within carbohydrate degradation; 2-deoxy-D-ribose 1-phosphate degradation; D-glyceraldehyde 3-phosphate and acetaldehyde from 2-deoxy-alpha-D-ribose 1-phosphate: step 1/2. In terms of biological role, isomerase that catalyzes the conversion of deoxy-ribose 1-phosphate (dRib-1-P) and ribose 1-phosphate (Rib-1-P) to deoxy-ribose 5-phosphate (dRib-5-P) and ribose 5-phosphate (Rib-5-P), respectively. The protein is Phosphopentomutase of Legionella pneumophila (strain Paris).